A 171-amino-acid chain; its full sequence is Probable deoxyuridine 5'-triphosphate nucleotidohydrolase (171 aa).

Belongs to the dCTP deaminase family. Archaeal dUTPase subfamily.

The enzyme catalyses dUTP + H2O = dUMP + diphosphate + H(+). It participates in pyrimidine metabolism; dUMP biosynthesis; dUMP from dCTP (dUTP route): step 2/2. This enzyme is involved in nucleotide metabolism: it produces dUMP, the immediate precursor of thymidine nucleotides and it decreases the intracellular concentration of dUTP so that uracil cannot be incorporated into DNA. The protein is Probable deoxyuridine 5'-triphosphate nucleotidohydrolase of Methanosarcina acetivorans (strain ATCC 35395 / DSM 2834 / JCM 12185 / C2A).